The primary structure comprises 31 residues: Protamine CIII (31 aa).

The disordered stretch occupies residues 1-31; sequence MPRRRRASRPVRRRRRPRVSRRRRRGGRRRR.

In terms of tissue distribution, testis.

Its subcellular location is the nucleus. The protein resides in the chromosome. Protamines substitute for histones in the chromatin of sperm during the haploid phase of spermatogenesis. They compact sperm DNA into a highly condensed, stable and inactive complex. This chain is Protamine CIII, found in Oncorhynchus mykiss (Rainbow trout).